The sequence spans 412 residues: Stachydrine N-demethylase (412 aa).

The Rieske domain occupies 45-150; sequence LYAVPVCQLA…LRNLDGLIYI (106 aa). Positions 86, 88, 106, and 109 each coordinate [2Fe-2S] cluster. Residues His204, His209, and Asp360 each coordinate Fe cation.

This sequence belongs to the bacterial ring-hydroxylating dioxygenase alpha subunit family. Homotrimer. The system is probably composed of an oxygenase subunit (Stc2) and two reductase subunits (Stc3 and Stc4). [2Fe-2S] cluster serves as cofactor. It depends on Fe cation as a cofactor.

The enzyme catalyses L-proline betaine + NADH + O2 + H(+) = N-methyl-L-proline + formaldehyde + NAD(+) + H2O. The catalysed reaction is L-proline betaine + NADPH + O2 + H(+) = N-methyl-L-proline + formaldehyde + NADP(+) + H2O. Functionally, monooxygenase involved in the catabolism of stachydrine (L-proline betaine), a source of carbon and nitrogen. Part of a Rieske-type oxygenase system that catalyzes the demethylation of stachydrine to produce N-methyl-L-proline (monomethylproline). Stc2 is the catalytic subunit. In Rhizobium meliloti (strain 1021) (Ensifer meliloti), this protein is Stachydrine N-demethylase.